Here is an 87-residue protein sequence, read N- to C-terminus: UPF0250 protein YbeD (87 aa).

The protein belongs to the UPF0250 family.

This Shigella boydii serotype 18 (strain CDC 3083-94 / BS512) protein is UPF0250 protein YbeD.